Here is a 184-residue protein sequence, read N- to C-terminus: Adenine phosphoribosyltransferase (184 aa).

Belongs to the purine/pyrimidine phosphoribosyltransferase family. In terms of assembly, homodimer.

The protein localises to the cytoplasm. The enzyme catalyses AMP + diphosphate = 5-phospho-alpha-D-ribose 1-diphosphate + adenine. It participates in purine metabolism; AMP biosynthesis via salvage pathway; AMP from adenine: step 1/1. Catalyzes a salvage reaction resulting in the formation of AMP, that is energically less costly than de novo synthesis. This Blochmanniella pennsylvanica (strain BPEN) protein is Adenine phosphoribosyltransferase.